The following is a 229-amino-acid chain: Uracil-DNA glycosylase (229 aa).

The active-site Proton acceptor is the Asp-64.

It belongs to the uracil-DNA glycosylase (UDG) superfamily. UNG family.

It localises to the cytoplasm. It catalyses the reaction Hydrolyzes single-stranded DNA or mismatched double-stranded DNA and polynucleotides, releasing free uracil.. Its function is as follows. Excises uracil residues from the DNA which can arise as a result of misincorporation of dUMP residues by DNA polymerase or due to deamination of cytosine. The polypeptide is Uracil-DNA glycosylase (Shigella flexneri serotype 5b (strain 8401)).